The primary structure comprises 81 residues: Antimicrobial peptide D2 (81 aa).

The first 31 residues, 1-31 (MAKTVLGIHVTFLTLLFAVILLNDVMYTPVE), serve as a signal peptide directing secretion. 4 disulfides stabilise this stretch: Cys34–Cys81, Cys45–Cys66, Cys51–Cys75, and Cys55–Cys77.

Antimicrobial peptide probably active against fungi like B.sorokiniana, F.oxysporum, F.graminearum, F.avenaceum, B.cinerea, P.beta, P.infestans and P.debaryanum. In Stellaria media (Common chickweed), this protein is Antimicrobial peptide D2.